The chain runs to 498 residues: Probable dipeptidase B (498 aa).

Cys-26 is an active-site residue.

Belongs to the peptidase C69 family.

The catalysed reaction is an L-aminoacyl-L-amino acid + H2O = 2 an L-alpha-amino acid. This is Probable dipeptidase B (pepDB) from Streptococcus pyogenes serotype M1.